The following is a 377-amino-acid chain: Queuine tRNA-ribosyltransferase (377 aa).

Asp89 functions as the Proton acceptor in the catalytic mechanism. Substrate contacts are provided by residues 89-93 (DSGGF), Asp143, Gln187, and Gly214. The interval 245–251 (GVGKPED) is RNA binding. Catalysis depends on Asp264, which acts as the Nucleophile. Positions 269–273 (TRNAR) are RNA binding; important for wobble base 34 recognition. Positions 302, 304, 307, and 333 each coordinate Zn(2+).

It belongs to the queuine tRNA-ribosyltransferase family. Homodimer. Within each dimer, one monomer is responsible for RNA recognition and catalysis, while the other monomer binds to the replacement base PreQ1. Requires Zn(2+) as cofactor.

It carries out the reaction 7-aminomethyl-7-carbaguanine + guanosine(34) in tRNA = 7-aminomethyl-7-carbaguanosine(34) in tRNA + guanine. Its pathway is tRNA modification; tRNA-queuosine biosynthesis. In terms of biological role, catalyzes the base-exchange of a guanine (G) residue with the queuine precursor 7-aminomethyl-7-deazaguanine (PreQ1) at position 34 (anticodon wobble position) in tRNAs with GU(N) anticodons (tRNA-Asp, -Asn, -His and -Tyr). Catalysis occurs through a double-displacement mechanism. The nucleophile active site attacks the C1' of nucleotide 34 to detach the guanine base from the RNA, forming a covalent enzyme-RNA intermediate. The proton acceptor active site deprotonates the incoming PreQ1, allowing a nucleophilic attack on the C1' of the ribose to form the product. After dissociation, two additional enzymatic reactions on the tRNA convert PreQ1 to queuine (Q), resulting in the hypermodified nucleoside queuosine (7-(((4,5-cis-dihydroxy-2-cyclopenten-1-yl)amino)methyl)-7-deazaguanosine). The protein is Queuine tRNA-ribosyltransferase of Shewanella halifaxensis (strain HAW-EB4).